The primary structure comprises 65 residues: UPF0337 protein PA4738 (65 aa).

The protein belongs to the UPF0337 (CsbD) family.

The protein is UPF0337 protein PA4738 of Pseudomonas aeruginosa (strain ATCC 15692 / DSM 22644 / CIP 104116 / JCM 14847 / LMG 12228 / 1C / PRS 101 / PAO1).